The primary structure comprises 382 residues: S-adenosylmethionine synthase (382 aa).

His15 contacts ATP. Asp17 serves as a coordination point for Mg(2+). Glu43 contributes to the K(+) binding site. 2 residues coordinate L-methionine: Glu56 and Gln99. A flexible loop region spans residues 99–109 (QSPDINQGVDR). ATP is bound by residues 164–166 (DAK), 230–231 (RF), Asp239, 245–246 (RK), Ala262, and Lys266. Asp239 provides a ligand contact to L-methionine. Lys270 is a binding site for L-methionine.

Belongs to the AdoMet synthase family. As to quaternary structure, homotetramer; dimer of dimers. It depends on Mg(2+) as a cofactor. The cofactor is K(+).

It is found in the cytoplasm. It catalyses the reaction L-methionine + ATP + H2O = S-adenosyl-L-methionine + phosphate + diphosphate. It participates in amino-acid biosynthesis; S-adenosyl-L-methionine biosynthesis; S-adenosyl-L-methionine from L-methionine: step 1/1. Catalyzes the formation of S-adenosylmethionine (AdoMet) from methionine and ATP. The overall synthetic reaction is composed of two sequential steps, AdoMet formation and the subsequent tripolyphosphate hydrolysis which occurs prior to release of AdoMet from the enzyme. The sequence is that of S-adenosylmethionine synthase from Glaesserella parasuis serovar 5 (strain SH0165) (Haemophilus parasuis).